The primary structure comprises 247 residues: 3-oxoacyl-[acyl-carrier-protein] reductase (247 aa).

11-35 (VTGASRGIGKATALALAATGMKVVV) lines the NADP(+) pocket. Ser-143 contributes to the substrate binding site. The Proton acceptor role is filled by Tyr-156.

Belongs to the short-chain dehydrogenases/reductases (SDR) family.

It carries out the reaction a (3R)-hydroxyacyl-[ACP] + NADP(+) = a 3-oxoacyl-[ACP] + NADPH + H(+). Its pathway is lipid metabolism; fatty acid biosynthesis. Functionally, catalyzes the NADPH-dependent reduction of beta-ketoacyl-ACP substrates to beta-hydroxyacyl-ACP products, the first reductive step in the elongation cycle of fatty acid biosynthesis. Is capable of reducing acetoacetyl-CoA, but less well than its paralog PhaB. In Synechocystis sp. (strain ATCC 27184 / PCC 6803 / Kazusa), this protein is 3-oxoacyl-[acyl-carrier-protein] reductase (fabG).